The chain runs to 185 residues: Elongation factor P (185 aa).

This sequence belongs to the elongation factor P family.

The protein resides in the cytoplasm. It functions in the pathway protein biosynthesis; polypeptide chain elongation. Its function is as follows. Involved in peptide bond synthesis. Stimulates efficient translation and peptide-bond synthesis on native or reconstituted 70S ribosomes in vitro. Probably functions indirectly by altering the affinity of the ribosome for aminoacyl-tRNA, thus increasing their reactivity as acceptors for peptidyl transferase. The polypeptide is Elongation factor P (Bordetella petrii (strain ATCC BAA-461 / DSM 12804 / CCUG 43448)).